The primary structure comprises 480 residues: Glutamate--tRNA ligase (480 aa).

Residues 21 to 31 carry the 'HIGH' region motif; it reads PSPTGYLHVGG. Zn(2+) is bound by residues Cys-110, Cys-112, Cys-137, and His-139. The 'KMSKS' region signature appears at 248–252; that stretch reads KLSKR. Lys-251 contacts ATP.

It belongs to the class-I aminoacyl-tRNA synthetase family. Glutamate--tRNA ligase type 1 subfamily. Monomer. Requires Zn(2+) as cofactor.

Its subcellular location is the cytoplasm. The catalysed reaction is tRNA(Glu) + L-glutamate + ATP = L-glutamyl-tRNA(Glu) + AMP + diphosphate. Its function is as follows. Catalyzes the attachment of glutamate to tRNA(Glu) in a two-step reaction: glutamate is first activated by ATP to form Glu-AMP and then transferred to the acceptor end of tRNA(Glu). This Actinobacillus succinogenes (strain ATCC 55618 / DSM 22257 / CCUG 43843 / 130Z) protein is Glutamate--tRNA ligase.